Here is a 236-residue protein sequence, read N- to C-terminus: Biosynthetic peptidoglycan transglycosylase (236 aa).

Residues 17–37 form a helical membrane-spanning segment; that stretch reads IVILVALALLALPYLLTILYG.

Belongs to the glycosyltransferase 51 family.

It is found in the cell inner membrane. It catalyses the reaction [GlcNAc-(1-&gt;4)-Mur2Ac(oyl-L-Ala-gamma-D-Glu-L-Lys-D-Ala-D-Ala)](n)-di-trans,octa-cis-undecaprenyl diphosphate + beta-D-GlcNAc-(1-&gt;4)-Mur2Ac(oyl-L-Ala-gamma-D-Glu-L-Lys-D-Ala-D-Ala)-di-trans,octa-cis-undecaprenyl diphosphate = [GlcNAc-(1-&gt;4)-Mur2Ac(oyl-L-Ala-gamma-D-Glu-L-Lys-D-Ala-D-Ala)](n+1)-di-trans,octa-cis-undecaprenyl diphosphate + di-trans,octa-cis-undecaprenyl diphosphate + H(+). The protein operates within cell wall biogenesis; peptidoglycan biosynthesis. Its function is as follows. Peptidoglycan polymerase that catalyzes glycan chain elongation from lipid-linked precursors. This chain is Biosynthetic peptidoglycan transglycosylase, found in Rhodopseudomonas palustris (strain ATCC BAA-98 / CGA009).